Here is a 422-residue protein sequence, read N- to C-terminus: Acyl-[acyl-carrier-protein] desaturase 6, chloroplastic (422 aa).

Residues 1 to 46 (MAATATMAMPLANRLRCKPNTNSSSPSRTLFGRRVTMISSSRWMCR) constitute a chloroplast transit peptide. Fe cation contacts are provided by E154, E192, H195, E245, E280, and H283.

This sequence belongs to the fatty acid desaturase type 2 family. As to quaternary structure, homodimer. Requires Fe(2+) as cofactor.

It is found in the plastid. The protein resides in the chloroplast. Its pathway is lipid metabolism; fatty acid metabolism. Introduces a cis double bond in the acyl chain of an acyl-[acyl-carrier protein]. The chain is Acyl-[acyl-carrier-protein] desaturase 6, chloroplastic from Oryza sativa subsp. indica (Rice).